Consider the following 266-residue polypeptide: ATP synthase subunit a (266 aa).

6 consecutive transmembrane segments (helical) span residues 38–58 (KQMLLVILSVVIIATFFILAA), 99–119 (LLFSLFFFILVNNIYGAIPVI), 126–146 (HVGGAYVMAGIVYFTWIIIGI), 162–182 (GVPWYILPIVVPIEIISNFLV), 191–211 (LFATMLAGHLIVMLAGSGIEF), and 224–244 (SVLVLVGAVAMYMLEALIMAL).

The protein belongs to the ATPase A chain family. As to quaternary structure, F-type ATPases have 2 components, CF(1) - the catalytic core - and CF(0) - the membrane proton channel. CF(1) has five subunits: alpha(3), beta(3), gamma(1), delta(1), epsilon(1). CF(0) has three main subunits: a(1), b(2) and c(9-12). The alpha and beta chains form an alternating ring which encloses part of the gamma chain. CF(1) is attached to CF(0) by a central stalk formed by the gamma and epsilon chains, while a peripheral stalk is formed by the delta and b chains.

The protein localises to the cell membrane. Key component of the proton channel; it plays a direct role in the translocation of protons across the membrane. The polypeptide is ATP synthase subunit a (Paenarthrobacter aurescens (strain TC1)).